The sequence spans 317 residues: Protein-methionine-sulfoxide reductase catalytic subunit MsrP (317 aa).

A signal peptide (tat-type signal) is located at residues 1–40; the sequence is MNKFTKTDVTPEKLFIQRRKIIQGMSVLSAAAAFPNLAAA. Mo-molybdopterin is bound by residues asparagine 72, 75-76, cysteine 129, threonine 164, asparagine 216, arginine 221, and 232-234; these read YE and SIK.

It belongs to the MsrP family. As to quaternary structure, heterodimer of a catalytic subunit (MsrP) and a heme-binding subunit (MsrQ). Mo-molybdopterin is required as a cofactor. Post-translationally, predicted to be exported by the Tat system. The position of the signal peptide cleavage has not been experimentally proven.

Its subcellular location is the periplasm. The catalysed reaction is L-methionyl-[protein] + a quinone + H2O = L-methionyl-(S)-S-oxide-[protein] + a quinol. The enzyme catalyses L-methionyl-[protein] + a quinone + H2O = L-methionyl-(R)-S-oxide-[protein] + a quinol. Its function is as follows. Part of the MsrPQ system that repairs oxidized periplasmic proteins containing methionine sulfoxide residues (Met-O), using respiratory chain electrons. Thus protects these proteins from oxidative-stress damage caused by reactive species of oxygen and chlorine generated by the host defense mechanisms. MsrPQ is essential for the maintenance of envelope integrity under bleach stress, rescuing a wide series of structurally unrelated periplasmic proteins from methionine oxidation. The catalytic subunit MsrP is non-stereospecific, being able to reduce both (R-) and (S-) diastereoisomers of methionine sulfoxide. The polypeptide is Protein-methionine-sulfoxide reductase catalytic subunit MsrP (Actinobacillus succinogenes (strain ATCC 55618 / DSM 22257 / CCUG 43843 / 130Z)).